The primary structure comprises 106 residues: Phosphoribosyl-ATP pyrophosphatase (106 aa).

It belongs to the PRA-PH family.

Its subcellular location is the cytoplasm. It carries out the reaction 1-(5-phospho-beta-D-ribosyl)-ATP + H2O = 1-(5-phospho-beta-D-ribosyl)-5'-AMP + diphosphate + H(+). Its pathway is amino-acid biosynthesis; L-histidine biosynthesis; L-histidine from 5-phospho-alpha-D-ribose 1-diphosphate: step 2/9. The polypeptide is Phosphoribosyl-ATP pyrophosphatase (Lactiplantibacillus plantarum (strain ATCC BAA-793 / NCIMB 8826 / WCFS1) (Lactobacillus plantarum)).